A 475-amino-acid polypeptide reads, in one-letter code: Aspartyl/glutamyl-tRNA(Asn/Gln) amidotransferase subunit B (475 aa).

This sequence belongs to the GatB/GatE family. GatB subfamily. In terms of assembly, heterotrimer of A, B and C subunits.

The enzyme catalyses L-glutamyl-tRNA(Gln) + L-glutamine + ATP + H2O = L-glutaminyl-tRNA(Gln) + L-glutamate + ADP + phosphate + H(+). It catalyses the reaction L-aspartyl-tRNA(Asn) + L-glutamine + ATP + H2O = L-asparaginyl-tRNA(Asn) + L-glutamate + ADP + phosphate + 2 H(+). Allows the formation of correctly charged Asn-tRNA(Asn) or Gln-tRNA(Gln) through the transamidation of misacylated Asp-tRNA(Asn) or Glu-tRNA(Gln) in organisms which lack either or both of asparaginyl-tRNA or glutaminyl-tRNA synthetases. The reaction takes place in the presence of glutamine and ATP through an activated phospho-Asp-tRNA(Asn) or phospho-Glu-tRNA(Gln). In Bacillus mycoides (strain KBAB4) (Bacillus weihenstephanensis), this protein is Aspartyl/glutamyl-tRNA(Asn/Gln) amidotransferase subunit B.